Consider the following 326-residue polypeptide: Mitochondrial glycine transporter (326 aa).

Solcar repeat units lie at residues 22 to 106, 135 to 216, and 228 to 312; these read SKTT…LRTS, SANL…LKRY, and SSSS…LILR. 6 helical membrane-spanning segments follow: residues 28–53, 81–107, 138–163, 191–214, 232–258, and 287–305; these read FGAG…TRVQ, GTLP…RTSL, LATG…VRYE, GFGA…EQLK, INFV…KTRL, and GLGL…AWTV.

It belongs to the mitochondrial carrier (TC 2.A.29) family. SLC25A38 subfamily.

The protein resides in the mitochondrion inner membrane. The enzyme catalyses glycine(in) = glycine(out). Its function is as follows. Mitochondrial glycine transporter that imports glycine into the mitochondrial matrix. Plays an important role in providing glycine for the first enzymatic step in heme biosynthesis, the condensation of glycine with succinyl-CoA to produce 5-aminolevulinate (ALA) in the mitochondrial matrix. This is Mitochondrial glycine transporter from Emericella nidulans (strain FGSC A4 / ATCC 38163 / CBS 112.46 / NRRL 194 / M139) (Aspergillus nidulans).